A 338-amino-acid chain; its full sequence is Ketol-acid reductoisomerase (NADP(+)) (338 aa).

Residues 1–181 (MKVYYDKDCD…GGGRTGIIET (181 aa)) enclose the KARI N-terminal Rossmann domain. NADP(+)-binding positions include 24-27 (YGSQ), Arg47, Ser50, Thr52, and 82-85 (DEFQ). His107 is a catalytic residue. Gly133 provides a ligand contact to NADP(+). The KARI C-terminal knotted domain occupies 182–327 (TFKDETETDL…EQLRSMMPWI (146 aa)). Residues Asp190, Glu194, Glu226, and Glu230 each coordinate Mg(2+). Ser251 contacts substrate.

It belongs to the ketol-acid reductoisomerase family. The cofactor is Mg(2+).

The enzyme catalyses (2R)-2,3-dihydroxy-3-methylbutanoate + NADP(+) = (2S)-2-acetolactate + NADPH + H(+). It carries out the reaction (2R,3R)-2,3-dihydroxy-3-methylpentanoate + NADP(+) = (S)-2-ethyl-2-hydroxy-3-oxobutanoate + NADPH + H(+). It functions in the pathway amino-acid biosynthesis; L-isoleucine biosynthesis; L-isoleucine from 2-oxobutanoate: step 2/4. It participates in amino-acid biosynthesis; L-valine biosynthesis; L-valine from pyruvate: step 2/4. Involved in the biosynthesis of branched-chain amino acids (BCAA). Catalyzes an alkyl-migration followed by a ketol-acid reduction of (S)-2-acetolactate (S2AL) to yield (R)-2,3-dihydroxy-isovalerate. In the isomerase reaction, S2AL is rearranged via a Mg-dependent methyl migration to produce 3-hydroxy-3-methyl-2-ketobutyrate (HMKB). In the reductase reaction, this 2-ketoacid undergoes a metal-dependent reduction by NADPH to yield (R)-2,3-dihydroxy-isovalerate. The polypeptide is Ketol-acid reductoisomerase (NADP(+)) (Pseudomonas fluorescens (strain SBW25)).